Here is a 501-residue protein sequence, read N- to C-terminus: Cytochrome P450 90A3 (501 aa).

A helical transmembrane segment spans residues 2–22 (AAAALLLLAAAAAIVVVAMVL). Residue Cys446 participates in heme binding.

Belongs to the cytochrome P450 family. The cofactor is heme. As to expression, highly expressed in shoot apex and inflorenscence. Expressed in roots, stems, leaf blades and leaf sheaths.

The protein resides in the membrane. It functions in the pathway plant hormone biosynthesis; brassinosteroid biosynthesis. Catalyzes the C23-alpha-hydroxylation step in brassinosteroid biosynthesis. Converts 6-deoxocathasterone (6-deoxoCT) to 6-deoxoteasterone (6-deoxoTE) in the late C6-oxidation pathway and cathasterone (CT) to teasterone (TE) in the early C6-oxidation pathway of brassinolide (BL) biosynthesis. The chain is Cytochrome P450 90A3 from Oryza sativa subsp. japonica (Rice).